Here is a 272-residue protein sequence, read N- to C-terminus: Shikimate dehydrogenase (NADP(+)) (272 aa).

Shikimate is bound by residues Ser14–Ser16 and Thr61. Residue Lys65 is the Proton acceptor of the active site. Glu77 lines the NADP(+) pocket. Residues Asn86 and Asp102 each contribute to the shikimate site. Residues Gly126–Ala130, Asn149–Arg154, and Met213 each bind NADP(+). Residue Tyr215 participates in shikimate binding. Position 237 (Gly237) interacts with NADP(+).

This sequence belongs to the shikimate dehydrogenase family. As to quaternary structure, homodimer.

The enzyme catalyses shikimate + NADP(+) = 3-dehydroshikimate + NADPH + H(+). Its pathway is metabolic intermediate biosynthesis; chorismate biosynthesis; chorismate from D-erythrose 4-phosphate and phosphoenolpyruvate: step 4/7. Involved in the biosynthesis of the chorismate, which leads to the biosynthesis of aromatic amino acids. Catalyzes the reversible NADPH linked reduction of 3-dehydroshikimate (DHSA) to yield shikimate (SA). The chain is Shikimate dehydrogenase (NADP(+)) from Escherichia coli O157:H7.